The following is a 149-amino-acid chain: Nucleoside diphosphate kinase (149 aa).

Residues Lys9, Phe57, Arg85, Thr91, Arg102, and Asn112 each coordinate ATP. His115 (pros-phosphohistidine intermediate) is an active-site residue.

Belongs to the NDK family. In terms of assembly, homotetramer. Mg(2+) serves as cofactor.

The protein localises to the cytoplasm. It carries out the reaction dZDP + ATP = dZTP + ADP. The enzyme catalyses a 2'-deoxyribonucleoside 5'-diphosphate + ATP = a 2'-deoxyribonucleoside 5'-triphosphate + ADP. It catalyses the reaction a ribonucleoside 5'-diphosphate + ATP = a ribonucleoside 5'-triphosphate + ADP. Its pathway is purine metabolism. In terms of biological role, major role in the synthesis of nucleoside triphosphates other than ATP. The ATP gamma phosphate is transferred to the NDP beta phosphate via a ping-pong mechanism, using a phosphorylated active-site intermediate. Functionally, (Microbial infection) Catalyzes the phosphorylation of dZDP to dZTP, when the bacterium is infected by a phage that produces the substrate for the synthesis of dZTP (2- amino-2'-deoxyadenosine 5'-triphosphate), which is then used by the phage as a DNA polymerase substrate. The sequence is that of Nucleoside diphosphate kinase from Synechococcus sp. (strain JA-3-3Ab) (Cyanobacteria bacterium Yellowstone A-Prime).